The primary structure comprises 122 residues: Large ribosomal subunit protein uL24 (122 aa).

The segment at 43–64 (IRKHHRRDMPTPQGGTTKGGII) is disordered.

Belongs to the universal ribosomal protein uL24 family. Part of the 50S ribosomal subunit.

Functionally, one of two assembly initiator proteins, it binds directly to the 5'-end of the 23S rRNA, where it nucleates assembly of the 50S subunit. One of the proteins that surrounds the polypeptide exit tunnel on the outside of the subunit. The chain is Large ribosomal subunit protein uL24 from Cutibacterium acnes (strain DSM 16379 / KPA171202) (Propionibacterium acnes).